A 143-amino-acid chain; its full sequence is Histone H2AX (143 aa).

A disordered region spans residues 1–22 (MSGRGKTGGKARAKAKSRSSRA). Residue Ser2 is modified to N-acetylserine. Residue Ser2 is modified to Phosphoserine. 2 positions are modified to N6-acetyllysine: Lys6 and Lys10. Residues 7–19 (TGGKARAKAKSRS) are compositionally biased toward basic residues. Lys10 is modified (N6-lactoyllysine; alternate). Glycyl lysine isopeptide (Lys-Gly) (interchain with G-Cter in ubiquitin) cross-links involve residues Lys14 and Lys16. Lys37 is modified (N6-acetyllysine; by CREBBP and EP300). A Glycyl lysine isopeptide (Lys-Gly) (interchain with G-Cter in ubiquitin) cross-link involves residue Lys120. Residues Ser121 and Ser122 each carry the phosphoserine modification. Residues 121-143 (SSATVGPKAPAVGKKASQASQEY) form a disordered region. Glycyl lysine isopeptide (Lys-Gly) (interchain with G-Cter in SUMO2) cross-links involve residues Lys128 and Lys135. Ser137 bears the Phosphoserine mark. A Phosphoserine; by ATM, ATR and PRKDC modification is found at Ser140. A [ST]-Q motif motif is present at residues 140–141 (SQ). Residue Tyr143 is modified to Phosphotyrosine; by WSTF.

The protein belongs to the histone H2A family. The nucleosome is a histone octamer containing two molecules each of H2A, H2B, H3 and H4 assembled in one H3-H4 heterotetramer and two H2A-H2B heterodimers. The octamer wraps approximately 147 bp of DNA. Interacts with numerous proteins required for DNA damage signaling and repair when phosphorylated on Ser-140. These include MDC1, BRCA1 and the MRN complex, composed of MRE11, RAD50, and NBN. Interaction with the MRN complex is mediated at least in part by NBN. Also interacts with DHX9/NDHII when phosphorylated on Ser-140 and MCPH1 when phosphorylated at Ser-140 or Tyr-143. Interacts with ARRB2; the interaction is detected in the nucleus upon OR1D2 stimulation. Interacts with WRAP53/TCAB1. Interacts with TP53BP1. Interacts with HDGFL2. Phosphorylated on Ser-140 (to form gamma-H2AX or H2AX139ph) in response to DNA double strand breaks (DSBs) generated by exogenous genotoxic agents, by stalled replication forks, by meiotic recombination events and during immunoglobulin class switching in lymphocytes. Phosphorylation can extend up to several thousand nucleosomes from the actual site of the DSB and may mark the surrounding chromatin for recruitment of proteins required for DNA damage signaling and repair. Widespread phosphorylation may also serve to amplify the damage signal or aid repair of persistent lesions. Phosphorylation of Ser-140 (H2AX139ph) in response to ionizing radiation is mediated by both ATM and PRKDC while defects in DNA replication induce Ser-140 phosphorylation (H2AX139ph) subsequent to activation of ATR and PRKDC. Dephosphorylation of Ser-140 by PP2A is required for DNA DSB repair. In meiosis, Ser-140 phosphorylation (H2AX139ph) first occurs at synaptonemal complexes during leptotene and is an ATM-dependent response to the formation of programmed DSBs by SPO11. Ser-140 phosphorylation (H2AX139ph) subsequently occurs at unsynapsed regions of both autosomes and the XY bivalent during zygotene and is ATR- and BRCA1-dependent. Ser-140 phosphorylation (H2AX139ph) may also be required for transcriptional repression of unsynapsed chromatin and meiotic sex chromosome inactivation (MSCI), whereby the X and Y chromosomes condense in pachytene to form the heterochromatic XY-body. During immunoglobulin class switch recombination in lymphocytes, Ser-140 phosphorylation (H2AX139ph) at sites of DNA-recombination requires the activation-induced cytidine deaminase AICDA. Phosphorylation at Tyr-143 (H2AXY142ph) by BAZ1B/WSTF determines the relative recruitment of either DNA repair or pro-apoptotic factors. Phosphorylation at Tyr-143 (H2AXY142ph) favors the recruitment of APBB1/FE65 and pro-apoptosis factors such as MAPK8/JNK1, triggering apoptosis. In contrast, dephosphorylation of Tyr-143 by EYA proteins (EYA1, EYA2, EYA3 or EYA4) favors the recruitment of MDC1-containing DNA repair complexes to the tail of phosphorylated Ser-140 (H2AX139ph). Phosphorylated by VRK1. Post-translationally, monoubiquitination of Lys-120 (H2AXK119ub) by RING1 and RNF2/RING2 complex gives a specific tag for epigenetic transcriptional repression. Following DNA double-strand breaks (DSBs), it is ubiquitinated through 'Lys-63' linkage of ubiquitin moieties by the E2 ligase UBE2N and the E3 ligases RNF8 and RNF168, leading to the recruitment of repair proteins to sites of DNA damage. Ubiquitination at Lys-14 and Lys-16 (H2AK13Ub and H2AK15Ub, respectively) in response to DNA damage is initiated by RNF168 that mediates monoubiquitination at these 2 sites, and 'Lys-63'-linked ubiquitin are then conjugated to monoubiquitin; RNF8 is able to extend 'Lys-63'-linked ubiquitin chains in vitro. H2AK119Ub and ionizing radiation-induced 'Lys-63'-linked ubiquitination (H2AK13Ub and H2AK15Ub) are distinct events. In terms of processing, acetylation at Lys-6 (H2AXK5ac) by KAT5 component of the NuA4 histone acetyltransferase complex promotes NBN/NBS1 assembly at the sites of DNA damage. Acetylation at Lys-37 increases in S and G2 phases. This modification has been proposed to be important for DNA double-strand break repair. In terms of tissue distribution, most abundant in testis, thymus and spleen.

It is found in the nucleus. Its subcellular location is the chromosome. Variant histone H2A which replaces conventional H2A in a subset of nucleosomes. Nucleosomes wrap and compact DNA into chromatin, limiting DNA accessibility to the cellular machineries which require DNA as a template. Histones thereby play a central role in transcription regulation, DNA repair, DNA replication and chromosomal stability. DNA accessibility is regulated via a complex set of post-translational modifications of histones, also called histone code, and nucleosome remodeling. Required for checkpoint-mediated arrest of cell cycle progression in response to low doses of ionizing radiation and for efficient repair of DNA double strand breaks (DSBs) specifically when modified by C-terminal phosphorylation. The polypeptide is Histone H2AX (Mus musculus (Mouse)).